A 396-amino-acid chain; its full sequence is S-adenosylmethionine synthase (396 aa).

Position 16 (H16) interacts with ATP. D18 is a Mg(2+) binding site. E44 is a binding site for K(+). Residues E57 and Q100 each contribute to the L-methionine site. The flexible loop stretch occupies residues 100–110; sequence QSPDIAQGVDR. ATP contacts are provided by residues 167-169, 233-234, D242, 248-249, A265, and K269; these read DAK, RF, and RK. D242 serves as a coordination point for L-methionine. K273 contributes to the L-methionine binding site.

Belongs to the AdoMet synthase family. As to quaternary structure, homotetramer; dimer of dimers. Requires Mg(2+) as cofactor. The cofactor is K(+).

Its subcellular location is the cytoplasm. It catalyses the reaction L-methionine + ATP + H2O = S-adenosyl-L-methionine + phosphate + diphosphate. Its pathway is amino-acid biosynthesis; S-adenosyl-L-methionine biosynthesis; S-adenosyl-L-methionine from L-methionine: step 1/1. Its function is as follows. Catalyzes the formation of S-adenosylmethionine (AdoMet) from methionine and ATP. The overall synthetic reaction is composed of two sequential steps, AdoMet formation and the subsequent tripolyphosphate hydrolysis which occurs prior to release of AdoMet from the enzyme. The protein is S-adenosylmethionine synthase of Paraburkholderia phytofirmans (strain DSM 17436 / LMG 22146 / PsJN) (Burkholderia phytofirmans).